Here is a 353-residue protein sequence, read N- to C-terminus: UPF0283 membrane protein YpsIP31758_1791 (353 aa).

3 helical membrane-spanning segments follow: residues 71-91 (MVTA…VQWV), 101-121 (IALG…GSVV), and 214-234 (ESAL…FIAW).

It belongs to the UPF0283 family.

The protein resides in the cell inner membrane. This is UPF0283 membrane protein YpsIP31758_1791 from Yersinia pseudotuberculosis serotype O:1b (strain IP 31758).